Here is a 207-residue protein sequence, read N- to C-terminus: Small ribosomal subunit protein uS4 (207 aa).

Residues 96-156 (SRLDNVVYRM…KKSHNQSRIY (61 aa)) form the S4 RNA-binding domain.

Belongs to the universal ribosomal protein uS4 family. In terms of assembly, part of the 30S ribosomal subunit. Contacts protein S5. The interaction surface between S4 and S5 is involved in control of translational fidelity.

In terms of biological role, one of the primary rRNA binding proteins, it binds directly to 16S rRNA where it nucleates assembly of the body of the 30S subunit. Its function is as follows. With S5 and S12 plays an important role in translational accuracy. This chain is Small ribosomal subunit protein uS4, found in Blochmanniella floridana.